The following is a 419-amino-acid chain: S-adenosylmethionine synthase (419 aa).

His-15 contributes to the ATP binding site. Asp-17 serves as a coordination point for Mg(2+). Glu-43 provides a ligand contact to K(+). Residues Glu-56 and Gln-100 each contribute to the L-methionine site. Positions 100-110 (QSPDIAQGVNE) are flexible loop. ATP is bound by residues 171–173 (DGK), 248–249 (KF), Asp-257, 263–264 (RK), Ala-280, and Lys-284. Asp-257 serves as a coordination point for L-methionine. An L-methionine-binding site is contributed by Lys-288.

Belongs to the AdoMet synthase family. As to quaternary structure, homotetramer; dimer of dimers. It depends on Mg(2+) as a cofactor. The cofactor is K(+).

It is found in the cytoplasm. It carries out the reaction L-methionine + ATP + H2O = S-adenosyl-L-methionine + phosphate + diphosphate. The protein operates within amino-acid biosynthesis; S-adenosyl-L-methionine biosynthesis; S-adenosyl-L-methionine from L-methionine: step 1/1. Its function is as follows. Catalyzes the formation of S-adenosylmethionine (AdoMet) from methionine and ATP. The overall synthetic reaction is composed of two sequential steps, AdoMet formation and the subsequent tripolyphosphate hydrolysis which occurs prior to release of AdoMet from the enzyme. The protein is S-adenosylmethionine synthase of Prochlorococcus marinus (strain MIT 9303).